Reading from the N-terminus, the 887-residue chain is MNELDKNYSPNEIEEKWYKIWEDSKYFAASLSSEKENYSIVIPPPNVTGILHMGHVLNNSIQDTLIRYNRMTGKNTLWMPGCDHAGIATQNKVERKLAEDGLKKEDIGREKFLEMTWDWKEKYGGIITKQLRKLGASLDWDRERFTMDEGLSYAVRKIFNDLYHDGLIYQGEYMVNWCPSCGTALADDEVDHEEKDGHLWQIKYPVKDSDEYIIIATSRPETMLADVAVAVHPEDERYKHLIGKTLILPLVNREIPVIADEYVDKEFGTGALKITPAHDPNDYNLGKKYNLPIINMLTPDGKIVEDYPKYAGLDRFEARKKIVEDLKAQDLFIKTEHLHHAVGQCYRCQTVIEPRVSPQWFVKMKPLAEKALEVVRNGEVKILPKRMEKIYYNWLENIRDWCISRQIWWGHRIPAWYGPDRHVFVAMDEAEAKEQAKKHYGHDVELSQEEDVLDTWFSSALWPFSTMGWPEKTKELDLFYPTNTLVTGADIIFFWVARMIMFGMYELKKIPFKNVFFHGIVRDEIGRKMSKSLGNSPDPLDLIKEYGVDAIRFSMIYNTSQGQDVHFSTDLLGMGRNFANKIWNATRFVIMNLKGFDVKSVDKTKLDYELVDKWIISRLNETAKDVKDCLEKFELDNAAKAVYEFLRGDFCDWYVEIAKIRLYNDDEDKKISKLTAQYMLWTILEQGLRLLHPFMPFITEEIWQKIKVDGDTIMLQQYPVADDSLIDVKIEKSFEYIKEVVSSLRNIRAEKGISPAKPAKVVVSTSNSEELETLEKNELFIKKLANLEELTCGTDLEAPSQSSLRVAGNSSVYMILTGLLNNEAEIKKINEQLAKLEKELEPVNRKLSDEKFTSKAPQHIIDRELRIQKEYQDKIKKLKESLKSFEE.

A 'HIGH' region motif is present at residues 45-55 (PNVTGILHMGH). The 'KMSKS' region signature appears at 528 to 532 (KMSKS). ATP is bound at residue lysine 531. Residues 817–887 (TGLLNNEAEI…LKESLKSFEE (71 aa)) are a coiled coil.

Belongs to the class-I aminoacyl-tRNA synthetase family. ValS type 1 subfamily. In terms of assembly, monomer.

Its subcellular location is the cytoplasm. It carries out the reaction tRNA(Val) + L-valine + ATP = L-valyl-tRNA(Val) + AMP + diphosphate. Catalyzes the attachment of valine to tRNA(Val). As ValRS can inadvertently accommodate and process structurally similar amino acids such as threonine, to avoid such errors, it has a 'posttransfer' editing activity that hydrolyzes mischarged Thr-tRNA(Val) in a tRNA-dependent manner. This is Valine--tRNA ligase from Fusobacterium nucleatum subsp. nucleatum (strain ATCC 25586 / DSM 15643 / BCRC 10681 / CIP 101130 / JCM 8532 / KCTC 2640 / LMG 13131 / VPI 4355).